A 554-amino-acid chain; its full sequence is Valerianol synthase TPS1B (554 aa).

Mg(2+) is bound by residues aspartate 307 and aspartate 311. The DDXXD motif signature appears at 326-330; that stretch reads VQRWD. Residues aspartate 452, serine 456, and glutamate 460 each coordinate Mg(2+).

This sequence belongs to the terpene synthase family. Requires Mg(2+) as cofactor.

It catalyses the reaction (2E,6E)-farnesyl diphosphate + H2O = valerianol + diphosphate. It functions in the pathway secondary metabolite biosynthesis; terpenoid biosynthesis. Functionally, terpene synthase that catalyzes the biosynthesis of the terpene valerianol, which is a volatile compound of floral scent. This chain is Valerianol synthase TPS1B, found in Camellia hiemalis (Camellia).